A 686-amino-acid chain; its full sequence is MIKANWTSTSAFNLELALDESRDWIERVINQKFPSDFQSSLRDGIFLCKLINQIQPNSVPKYNQSPSTDFAKRENIQLFIKSAKHSMGLRDTQLFESQDLFESIRIRNIAITLYWLGRAARASQTYKGPQLDLLKFQGMNCSACKKAITNNDYLTTMTQQFHTSCAVCCSCSCKLDPKKKFYQESNNFWCENCMLGATNLGGSNNSSGGKNKSNNNNNNKCSGCFGSLEKGYVPDENDKEKKYCTSCICDLCHDPLIGNFQVKDGKKVCDSCSCKSCGKSLEDGYYEEGISKYCEPCAKDRNKPKQVMDKDGHDHHHHNHNKPTTTTTTTNSNSPLAKKKSDSCKMCDKPVDNKTKKYGDDRDKYCTPHEKDGTCGKCNGELVGSAISVMDKNFHPQCFKCDSCNKNLNQNDQIKKSPTTGNPLCGPCSSNNNKSSKNCHDCKKPISGSSVEALDRPYHPNCLKCYSCSKNLKEDFTEVDNEPFCNPCASQLNQYTSGNQKQPKQGGSPFITSGWLDSDRCVVCVKPLNGEVAKIFDSFYHKGCFKCTDKSCNAPLLTGYFPHDKKPYCQKCSIKIQQSTTTDHCAKCSKPIIEGSILKVAGKVYHKSCYDNEKHTSSSSSSSSVNCFKCKSQITGTQFVRLDQKDYCMKCSPSASSSTTVTHGERLNYGMTVDPRSGKRVFNTSK.

A Calponin-homology (CH) domain is found at 15 to 120; it reads ELALDESRDW…ITLYWLGRAA (106 aa). LIM zinc-binding domains are found at residues 139–200 and 219–279; these read MNCS…ATNL and NKCS…SCGK. Residues 305–314 show a composition bias toward basic and acidic residues; the sequence is KQVMDKDGHD. A disordered region spans residues 305-345; sequence KQVMDKDGHDHHHHNHNKPTTTTTTTNSNSPLAKKKSDSCK. Over residues 322–333 the composition is skewed to low complexity; that stretch reads KPTTTTTTTNSN. LIM zinc-binding domains follow at residues 373–435, 437–495, 519–579, and 583–658; these read GTCG…NNKS, KNCH…LNQY, DRCV…IQQS, and DHCA…ASSS.

As to quaternary structure, interacts with limF and rab21.

Involved in the regulation of phagocytosis. May repress rab21. The sequence is that of Calponin homology and LIM domain-containing protein (ChLim) from Dictyostelium discoideum (Social amoeba).